The primary structure comprises 126 residues: Defensin-like protein 183 (126 aa).

An N-terminal signal peptide occupies residues 1-26 (MEKALSLVVFIIFSIMLASVENKVNA). Intrachain disulfides connect Cys-29/Cys-68, Cys-36/Cys-55, Cys-39/Cys-62, Cys-43/Cys-64, Cys-80/Cys-126, Cys-91/Cys-111, Cys-96/Cys-120, and Cys-100/Cys-122.

Belongs to the DEFL family.

The protein localises to the secreted. This Arabidopsis thaliana (Mouse-ear cress) protein is Defensin-like protein 183 (LCR19).